An 81-amino-acid polypeptide reads, in one-letter code: Small ribosomal subunit protein bS18 (81 aa).

This sequence belongs to the bacterial ribosomal protein bS18 family. In terms of assembly, part of the 30S ribosomal subunit. Forms a tight heterodimer with protein bS6.

Its function is as follows. Binds as a heterodimer with protein bS6 to the central domain of the 16S rRNA, where it helps stabilize the platform of the 30S subunit. In Leptospira borgpetersenii serovar Hardjo-bovis (strain JB197), this protein is Small ribosomal subunit protein bS18.